Consider the following 392-residue polypeptide: MNIHEYQGKGILKQFGVAVPKGIVAFSAEEAKQAAAELFEEQSSPVVVVKAQIHAGGRGKAGGVKLAKSPEEVYEIAQKMLGTTLVTHQTGPEGKEVRRLLIEEGMNIDKEFYLGITLDRATSCNVLMVSTEGGMEIEKVAEETPEKLLKIQVNPKYGLQGFQAREAALFLGMQGEQFRNGVKFIDALYKAYTTIDASLAEINPLVVTKEGRVLALDAKINFDDNAMYRHPDFHELRDITEEDPLEYEASKSNLNYVRLDGNVGCMVNGAGLAMGTMDLIQLAGGKPANFLDVGGGASPKTVEEGFKIILGDKNVKAILVNVFGGIVRCDRVAGGVIEAAKNIGLTVPVIVRLEGTNAKEAQKMLDESGLSLIAANGLRDAAEKVQKALASA.

The 240-residue stretch at 9-248 folds into the ATP-grasp domain; the sequence is KGILKQFGVA…ITEEDPLEYE (240 aa). ATP is bound by residues K50, 57–59, E103, M106, and E111; that span reads GRG. The Mg(2+) site is built by N203 and D217. Residues N268 and 325 to 327 contribute to the substrate site; that span reads GIV.

It belongs to the succinate/malate CoA ligase beta subunit family. Heterotetramer of two alpha and two beta subunits. Requires Mg(2+) as cofactor.

It carries out the reaction succinate + ATP + CoA = succinyl-CoA + ADP + phosphate. It catalyses the reaction GTP + succinate + CoA = succinyl-CoA + GDP + phosphate. It participates in carbohydrate metabolism; tricarboxylic acid cycle; succinate from succinyl-CoA (ligase route): step 1/1. Succinyl-CoA synthetase functions in the citric acid cycle (TCA), coupling the hydrolysis of succinyl-CoA to the synthesis of either ATP or GTP and thus represents the only step of substrate-level phosphorylation in the TCA. The beta subunit provides nucleotide specificity of the enzyme and binds the substrate succinate, while the binding sites for coenzyme A and phosphate are found in the alpha subunit. The sequence is that of Succinate--CoA ligase [ADP-forming] subunit beta from Chlorobaculum parvum (strain DSM 263 / NCIMB 8327) (Chlorobium vibrioforme subsp. thiosulfatophilum).